The sequence spans 1408 residues: DNA-directed RNA polymerase subunit beta (1408 aa).

Residues 1383–1408 (PERQRSFGGDFLGGGDGEERKTGTEA) are disordered. Positions 1399–1408 (GEERKTGTEA) are enriched in basic and acidic residues.

Belongs to the RNA polymerase beta chain family. The RNAP catalytic core consists of 2 alpha, 1 beta, 1 beta' and 1 omega subunit. When a sigma factor is associated with the core the holoenzyme is formed, which can initiate transcription.

It carries out the reaction RNA(n) + a ribonucleoside 5'-triphosphate = RNA(n+1) + diphosphate. DNA-dependent RNA polymerase catalyzes the transcription of DNA into RNA using the four ribonucleoside triphosphates as substrates. In Myxococcus xanthus (strain DK1622), this protein is DNA-directed RNA polymerase subunit beta.